A 450-amino-acid chain; its full sequence is Phosphoglucosamine mutase (450 aa).

Residue Ser-102 is the Phosphoserine intermediate of the active site. Mg(2+) contacts are provided by Ser-102, Asp-243, Asp-245, and Asp-247. Phosphoserine is present on Ser-102.

It belongs to the phosphohexose mutase family. The cofactor is Mg(2+). Activated by phosphorylation.

The enzyme catalyses alpha-D-glucosamine 1-phosphate = D-glucosamine 6-phosphate. Catalyzes the conversion of glucosamine-6-phosphate to glucosamine-1-phosphate. This chain is Phosphoglucosamine mutase, found in Mesorhizobium japonicum (strain LMG 29417 / CECT 9101 / MAFF 303099) (Mesorhizobium loti (strain MAFF 303099)).